Reading from the N-terminus, the 224-residue chain is Protein DEHYDRATION-INDUCED 19 homolog 4 (224 aa).

Positions 1–12 are enriched in polar residues; it reads MDSNWINCPSVF. The tract at residues 1–23 is disordered; sequence MDSNWINCPSVFSSSSSSSRRCQ. Positions 13–23 are enriched in low complexity; the sequence is SSSSSSSRRCQ. A Phosphothreonine modification is found at Thr-117.

Belongs to the Di19 family. In terms of processing, phosphorylated in vitro by CPK3 or CPK11. As to expression, expressed in seedlings, roots, leaves, stems, flowers and siliques.

It localises to the cytoplasm. Its subcellular location is the perinuclear region. The chain is Protein DEHYDRATION-INDUCED 19 homolog 4 (DI19-4) from Arabidopsis thaliana (Mouse-ear cress).